Consider the following 308-residue polypeptide: Ribosomal RNA small subunit methyltransferase H (308 aa).

S-adenosyl-L-methionine contacts are provided by residues 33-35 (GGH), aspartate 52, tyrosine 81, aspartate 99, and glutamine 106.

This sequence belongs to the methyltransferase superfamily. RsmH family.

The protein localises to the cytoplasm. It catalyses the reaction cytidine(1402) in 16S rRNA + S-adenosyl-L-methionine = N(4)-methylcytidine(1402) in 16S rRNA + S-adenosyl-L-homocysteine + H(+). In terms of biological role, specifically methylates the N4 position of cytidine in position 1402 (C1402) of 16S rRNA. The chain is Ribosomal RNA small subunit methyltransferase H from Francisella philomiragia subsp. philomiragia (strain ATCC 25017 / CCUG 19701 / FSC 153 / O#319-036).